A 660-amino-acid chain; its full sequence is Leucine-rich repeat transmembrane protein FLRT2 (660 aa).

Residues 1–35 (MGLQTAKWPSHGTFVLKFWLIMSLGLYSHVSKLLA) form the signal peptide. Intrachain disulfides connect Cys-36/Cys-42 and Cys-40/Cys-49. Residues 36-67 (CPSVCRCDRNFVYCNERSLTSVPLGIPEGVTV) enclose the LRRNT domain. At 36–540 (CPSVCRCDRN…QTTSHTMGSP (505 aa)) the chain is on the extracellular side. LRR repeat units lie at residues 62–87 (PEGV…LHNV), 88–108 (QSVH…MNLP), 109–131 (KNVR…ALAQ), 132–157 (LLKL…AFRE), 159–181 (ISLK…LPVD), 183–202 (QELR…AFQN), 203–228 (LTSL…TFSH), 229–251 (LTKL…DLPG), 252–274 (THLI…AFAN), and 275–298 (LRKL…VFDH). A glycan (N-linked (GlcNAc...) asparagine) is linked at Asn-202. Cystine bridges form between Cys-314–Cys-339 and Cys-316–Cys-360. Residues 338-361 (MCQGPEQVRGMAVRELNMNLLSCP) form the LRRCT domain. Residues 372 to 396 (PAPSTVSPTTQSPTVSVPSPSRGSV) show a composition bias toward low complexity. The disordered stretch occupies residues 372-413 (PAPSTVSPTTQSPTVSVPSPSRGSVPPAPAPSKLPTIPDWDG). Residues 419–517 (PPISERIQLS…ICSEATTHAS (99 aa)) form the Fibronectin type-III domain. The helical transmembrane segment at 541-561 (FLLAGLIGGAVIFVLVVLLSV) threads the bilayer. Residues 562-660 (FCWHMHKKGR…SVPDLEHCHT (99 aa)) are Cytoplasmic-facing.

In terms of assembly, self-associates (via leucine-rich repeats), giving rise to homooligomers. Interacts with FGFR1. Interacts with FGFR2. Interacts (via extracellular domain) with ADGRL1/LPHN1. Interacts (via extracellular domain) with ADGRL3 (via olfactomedin-like domain). Interacts (via extracellular domain) with UNC5D (via the first Ig-like domain). Can also interact (via extracellular domain) with UNC5B, but with much lower affinity. Interacts (via extracellular domain) with FN1. In terms of processing, N-glycosylated. Post-translationally, proteolytic cleavage in the juxtamembrane region gives rise to a soluble ectodomain. Cleavage is probably effected by a metalloprotease. Detected in brain (at protein level).

It is found in the cell membrane. The protein resides in the endoplasmic reticulum membrane. Its subcellular location is the synapse. It localises to the synaptosome. The protein localises to the cell junction. It is found in the focal adhesion. The protein resides in the secreted. Its subcellular location is the extracellular space. It localises to the extracellular matrix. The protein localises to the microsome membrane. Its function is as follows. Functions in cell-cell adhesion, cell migration and axon guidance. Mediates cell-cell adhesion via its interactions with ADGRL3 and probably also other latrophilins that are expressed at the surface of adjacent cells. May play a role in the migration of cortical neurons during brain development via its interaction with UNC5D. Mediates axon growth cone collapse and plays a repulsive role in neuron guidance via its interaction with UNC5D, and possibly also other UNC-5 family members. Plays a role in fibroblast growth factor-mediated signaling cascades. Required for normal organization of the cardiac basement membrane during embryogenesis, and for normal embryonic epicardium and heart morphogenesis. This Rattus norvegicus (Rat) protein is Leucine-rich repeat transmembrane protein FLRT2.